The sequence spans 571 residues: Potassium-transporting ATPase potassium-binding subunit (571 aa).

12 consecutive transmembrane segments (helical) span residues 5 to 25 (LAAG…YVPV), 60 to 80 (YGYA…LYAL), 86 to 106 (VLPL…NTAV), 131 to 151 (GLAV…VALI), 177 to 197 (ILLP…VIQS), 247 to 267 (PTPV…VSLT), 291 to 311 (LTLL…TLAA), 334 to 354 (FGIP…TGAV), 386 to 406 (GLYG…LLVG), 425 to 445 (ALSV…TVIL), 498 to 518 (ALGL…LALA), and 547 to 567 (GTVV…GPIA).

It belongs to the KdpA family. As to quaternary structure, the system is composed of three essential subunits: KdpA, KdpB and KdpC.

The protein localises to the cell membrane. Part of the high-affinity ATP-driven potassium transport (or Kdp) system, which catalyzes the hydrolysis of ATP coupled with the electrogenic transport of potassium into the cytoplasm. This subunit binds the extracellular potassium ions and delivers the ions to the membrane domain of KdpB through an intramembrane tunnel. The sequence is that of Potassium-transporting ATPase potassium-binding subunit from Rhodococcus jostii (strain RHA1).